The primary structure comprises 143 residues: Putative aryl-alcohol dehydrogenase AAD15 (143 aa).

It belongs to the aldo/keto reductase family. Aldo/keto reductase 2 subfamily.

In terms of biological role, putative aryl-alcohol dehydrogenase. In Saccharomyces cerevisiae (strain ATCC 204508 / S288c) (Baker's yeast), this protein is Putative aryl-alcohol dehydrogenase AAD15 (AAD15).